An 847-amino-acid polypeptide reads, in one-letter code: Alanine--tRNA ligase (847 aa).

The Zn(2+) site is built by H554, H558, C656, and H660.

Belongs to the class-II aminoacyl-tRNA synthetase family. Zn(2+) serves as cofactor.

The protein resides in the cytoplasm. The enzyme catalyses tRNA(Ala) + L-alanine + ATP = L-alanyl-tRNA(Ala) + AMP + diphosphate. Functionally, catalyzes the attachment of alanine to tRNA(Ala) in a two-step reaction: alanine is first activated by ATP to form Ala-AMP and then transferred to the acceptor end of tRNA(Ala). Also edits incorrectly charged Ser-tRNA(Ala) and Gly-tRNA(Ala) via its editing domain. The protein is Alanine--tRNA ligase of Helicobacter pylori (strain HPAG1).